We begin with the raw amino-acid sequence, 630 residues long: MALRKELLKSIWYAFTALDVEKSGKVSKSQLKVLSHNLYTVLNIPHDPVALEEHFRDDDDGPVSSQGYMPYLNKYILDKVEEGAFVKEHFDELCWTLTAKKNYRADGIGSSPLSNQDAFRLWCLFNFLSEDKYPLIMVPDEVEYLLKKLLGSLSLEMGLGELEELLAQDAQSAQTAVGLSVWQFLELFNSGRCLRGVGRDSLSMAIQEVYQELIQDVLKQGYLWKRGHLRRNWAERWFQLQPSSLCYFGSEECKEKRGTIPLDAHCCVEVLPDREGKRCMFCVKTASRTYEMSASDTRQRQEWTAAIQTAIRLQAEGKTSLHKDLKQKRREQREQRERRRAAKEEELLRLQQLQEEKERKLQELELLQEAQRQAERLLQEEEERRRSQHKELQQALEGQLREAEQARASMQAEMELKKEEAARQRQRIAELEEMQERLQEALQLEVKARRDEEAVRLAQTRLLEEEEEKLKQLMHLKEEQERYIERAQQEKQELQQEMALQSRSLQHAQQQLEEVRQNRQRADEDVEAAQRKLRQASTNVKHWNVQMNRLMHPIEPGDKRPTTSSSFTGFQPPPLARRDSSLKRLTRWGSQGNRTLSVNSSEQKSLNGGDETPILALASQEEKLDPAPGN.

At tyrosine 210 the chain carries Phosphotyrosine. The PH domain maps to 216 to 312; the sequence is DVLKQGYLWK…WTAAIQTAIR (97 aa). N6-acetyllysine is present on lysine 225. 3 disordered regions span residues 318–341, 378–418, and 552–630; these read KTSL…RRRA, LQEE…ELKK, and HPIE…APGN. Composition is skewed to basic and acidic residues over residues 331-341 and 378-392; these read EQREQRERRRA and LQEE…HKEL. Residues 588–606 show a composition bias toward polar residues; that stretch reads WGSQGNRTLSVNSSEQKSL. A Phosphoserine modification is found at serine 590. Residues 620-630 are compositionally biased toward basic and acidic residues; it reads QEEKLDPAPGN.

In terms of assembly, interacts with IRF4, activated RAC1 and F-actin. Both the phosphorylated and non-phosphorylated forms bind phosphatidylinositol 3,4,5-trisphosphate (PtdInsP3). Interacts with ZAP70. Interacts with RAB11A. In terms of processing, tyrosine-phosphorylated by tyrosine-protein kinase LCK in response to T-cell activation. In terms of tissue distribution, thymus.

The protein resides in the cytoplasm. Its subcellular location is the cell membrane. It localises to the nucleus. The protein localises to the cytoskeleton. It is found in the perinuclear region. The protein resides in the cell projection. Its subcellular location is the filopodium. Functionally, phosphatidylinositol 3,4,5-trisphosphate-dependent guanine nucleotide exchange factor (GEF) which plays a role in the activation of Rho GTPases RAC1, RhoA and CDC42. Can regulate cell morphology in cooperation with activated RAC1. Involved in immune homeostasis by ensuring proper trafficking and availability of T-cell regulator CTLA-4 at T-cell surface. Plays a role in Th2 (T helper cells) development and/or activation, perhaps by interfering with ZAP70 signaling. Required for optimal T-cell effector function, lymphocyte homeostasis and the prevention of systemic autoimmunity. This Mus musculus (Mouse) protein is Differentially expressed in FDCP 6 (Def6).